Consider the following 475-residue polypeptide: Ribulose bisphosphate carboxylase large chain (475 aa).

Positions 1–2 (MS) are excised as a propeptide. N-acetylproline is present on Pro-3. N6,N6,N6-trimethyllysine is present on Lys-14. The substrate site is built by Asn-123 and Thr-173. The active-site Proton acceptor is Lys-175. Lys-177 serves as a coordination point for substrate. Residues Lys-201, Asp-203, and Glu-204 each coordinate Mg(2+). Lys-201 bears the N6-carboxylysine mark. Residue His-294 is the Proton acceptor of the active site. Residues Arg-295, His-327, and Ser-379 each coordinate substrate.

This sequence belongs to the RuBisCO large chain family. Type I subfamily. Heterohexadecamer of 8 large chains and 8 small chains; disulfide-linked. The disulfide link is formed within the large subunit homodimers. Mg(2+) is required as a cofactor. In terms of processing, the disulfide bond which can form in the large chain dimeric partners within the hexadecamer appears to be associated with oxidative stress and protein turnover.

It is found in the plastid. It localises to the chloroplast. It carries out the reaction 2 (2R)-3-phosphoglycerate + 2 H(+) = D-ribulose 1,5-bisphosphate + CO2 + H2O. The enzyme catalyses D-ribulose 1,5-bisphosphate + O2 = 2-phosphoglycolate + (2R)-3-phosphoglycerate + 2 H(+). In terms of biological role, ruBisCO catalyzes two reactions: the carboxylation of D-ribulose 1,5-bisphosphate, the primary event in carbon dioxide fixation, as well as the oxidative fragmentation of the pentose substrate in the photorespiration process. Both reactions occur simultaneously and in competition at the same active site. This chain is Ribulose bisphosphate carboxylase large chain, found in Spirogyra maxima (Green alga).